We begin with the raw amino-acid sequence, 467 residues long: UDP-N-acetylmuramate--L-alanine ligase (467 aa).

ATP is bound at residue 112 to 118; it reads GTHGKTT.

This sequence belongs to the MurCDEF family.

It is found in the cytoplasm. The enzyme catalyses UDP-N-acetyl-alpha-D-muramate + L-alanine + ATP = UDP-N-acetyl-alpha-D-muramoyl-L-alanine + ADP + phosphate + H(+). It functions in the pathway cell wall biogenesis; peptidoglycan biosynthesis. Its function is as follows. Cell wall formation. The sequence is that of UDP-N-acetylmuramate--L-alanine ligase from Azoarcus sp. (strain BH72).